Reading from the N-terminus, the 485-residue chain is MQHLSILLVVLGSSIAFAQHDPHFADGRNTIVHLFGWKWGDIASECENWLRKKGFAGVQISPPSENPIVSGRPWWENYQPVSYDLKNRNGDEDSLSDMIKRCNNVGVRIYADLVVNHMATSIGQGTADHSYDPGSKSYPAVPYSNENFHASCDIDYNDAASIRNCELSGLKDLDQSQDYVRGKIVDYMNHLVSLGVAGFRVDAAKHMWPADLAAIFGSVNDLNTDFFPSGSRAYIYQEVIDTGSDPIDNKDYTGFGSVCEFKYGIQLATCFRGSNPLKYLENWGTGWGLLDGGNTLVFIDNHDTERSSGSYLNYKESRAYKAANAFMLAHPYDGITKIMSSYDFSDNDQSPPSDGDNILSPGFKEDGTCTNGWICQHRWSPIFNMVEFRSVVSGIELTNWWSGGDYQIAFSRGTKGTIAISINDSLDSDVPTGLPDGTYCDVISGSLSNGSCTGKSITVSGGKAHISIASDDREAAVAIHANAKL.

The N-terminal stretch at 1–18 (MQHLSILLVVLGSSIAFA) is a signal peptide. Gln-19 bears the Pyrrolidone carboxylic acid mark. The cysteines at positions 46 and 102 are disulfide-linked. 3 residues coordinate Ca(2+): Asn-116, Arg-163, and Asp-172. Cys-152 and Cys-165 are oxidised to a cystine. Arg-200 is a binding site for chloride. Catalysis depends on Asp-202, which acts as the Nucleophile. A Ca(2+)-binding site is contributed by His-206. The Proton donor role is filled by Glu-238. Position 301 (Asn-301) interacts with chloride. Cys-369 and Cys-375 form a disulfide bridge. Asn-423 and Asn-449 each carry an N-linked (GlcNAc...) asparagine glycan. Cysteines 440 and 452 form a disulfide.

It belongs to the glycosyl hydrolase 13 family. Monomer. It depends on Ca(2+) as a cofactor. The cofactor is chloride.

The catalysed reaction is Endohydrolysis of (1-&gt;4)-alpha-D-glucosidic linkages in polysaccharides containing three or more (1-&gt;4)-alpha-linked D-glucose units.. In terms of biological role, involved in the digestion of starch. The protein is Alpha-amylase of Hypothenemus hampei (Coffee berry borer).